A 325-amino-acid polypeptide reads, in one-letter code: Biotin synthase (325 aa).

The Radical SAM core domain maps to 49 to 267; sequence TQVQISTLLS…IAAARISMPR (219 aa). [4Fe-4S] cluster contacts are provided by Cys-64, Cys-68, and Cys-71. 4 residues coordinate [2Fe-2S] cluster: Cys-108, Cys-139, Cys-199, and Arg-271.

This sequence belongs to the radical SAM superfamily. Biotin synthase family. In terms of assembly, homodimer. The cofactor is [4Fe-4S] cluster. [2Fe-2S] cluster is required as a cofactor.

It catalyses the reaction (4R,5S)-dethiobiotin + (sulfur carrier)-SH + 2 reduced [2Fe-2S]-[ferredoxin] + 2 S-adenosyl-L-methionine = (sulfur carrier)-H + biotin + 2 5'-deoxyadenosine + 2 L-methionine + 2 oxidized [2Fe-2S]-[ferredoxin]. Its pathway is cofactor biosynthesis; biotin biosynthesis; biotin from 7,8-diaminononanoate: step 2/2. Functionally, catalyzes the conversion of dethiobiotin (DTB) to biotin by the insertion of a sulfur atom into dethiobiotin via a radical-based mechanism. The chain is Biotin synthase from Acidiphilium cryptum (strain JF-5).